Consider the following 85-residue polypeptide: Glutaredoxin 1 (85 aa).

Positions 1-85 constitute a Glutaredoxin domain; that stretch reads MQTVIFGRSG…AAWVKENLDA (85 aa). Residues cysteine 11 and cysteine 14 are joined by a disulfide bond.

Belongs to the glutaredoxin family. In terms of assembly, monomer.

Functionally, the disulfide bond functions as an electron carrier in the glutathione-dependent synthesis of deoxyribonucleotides by the enzyme ribonucleotide reductase. In addition, it is also involved in reducing some disulfides in a coupled system with glutathione reductase. The chain is Glutaredoxin 1 (grxA) from Shigella flexneri.